Here is a 400-residue protein sequence, read N- to C-terminus: Nucleoside permease NupC (400 aa).

At 1–3 (MDR) the chain is on the cytoplasmic side. A helical transmembrane segment spans residues 4–24 (VLHFVLALAVVAILALLVSSD). The Periplasmic portion of the chain corresponds to 25-36 (RKKIRIRYVIQL). A helical transmembrane segment spans residues 37–57 (LVIEVLLAWFFLNSDVGLGFV). Residues 58-86 (KGFSEMFEKLLGFANEGTNFVFGSMNDQG) are Cytoplasmic-facing. The helical transmembrane segment at 87-107 (LAFFFLKVLCPIVFISALIGI) threads the bilayer. The Periplasmic portion of the chain corresponds to 108–168 (LQHIRVLPVI…GKISRNRMYT (61 aa)). Residues 169–189 (MAATAMSTVSMSIVGAYMTML) form a helical membrane-spanning segment. The Cytoplasmic portion of the chain corresponds to 190–192 (EPK). Residues 193–213 (YVVAALVLNMFSTFIVLSLIN) form a helical membrane-spanning segment. Residues 214 to 250 (PYRVDASEENIQMSNLHEGQSFFEMLGEYILAGFKVA) lie on the Periplasmic side of the membrane. A helical transmembrane segment spans residues 251 to 271 (IIVAAMLIGFIALIAALNALF). Residues 272 to 281 (ATVTGWFGYS) are Cytoplasmic-facing. A helical transmembrane segment spans residues 282-302 (ISFQGILGYIFYPIAWVMGVP). The Periplasmic portion of the chain corresponds to 303–341 (SSEALQVGSIMATKLVSNEFVAMMDLQKIASTLSPRAEG). A helical transmembrane segment spans residues 342–362 (IISVFLVSFANFSSIGIIAGA). Topologically, residues 363 to 378 (VKGLNEEQGNVVSRFG) are cytoplasmic. A helical transmembrane segment spans residues 379–399 (LKLVYGSTLVSVLSASIAALV). Position 400 (Leu400) is a topological domain, periplasmic.

Belongs to the concentrative nucleoside transporter (CNT) (TC 2.A.41) family.

It is found in the cell inner membrane. It catalyses the reaction adenosine(in) + H(+)(in) = adenosine(out) + H(+)(out). It carries out the reaction uridine(in) + H(+)(in) = uridine(out) + H(+)(out). The enzyme catalyses thymidine(in) + H(+)(in) = thymidine(out) + H(+)(out). The catalysed reaction is cytidine(in) + H(+)(in) = cytidine(out) + H(+)(out). It catalyses the reaction 2'-deoxycytidine(in) + H(+)(in) = 2'-deoxycytidine(out) + H(+)(out). Transport is inhibited by the proton uncoupler dinitrophenol. Inhibited by the nucleoside antibiotic showdomycin. Nucleoside transport protein that can transport adenosine, uridine, thymidine, cytidine and deoxycytidine. Shows weak activity with inosine and xanthosine. Transport is driven by a proton motive force. Does not transport guanosine, deoxyguanosine, hypoxanthine or uracil. Also shows activity with the chemotherapeutic drugs 3'-azido-3'-deoxythymidine (AZT), 2',3'- dideoxycytidine (ddC) and 2'-deoxy-2',2'-difluorocytidine (gemcitabine). The polypeptide is Nucleoside permease NupC (Escherichia coli (strain K12)).